The chain runs to 505 residues: MEIRAEEISQIIKEQIRGFDKKVELSETGVVLSVGDGIARVYGLEKVMTMELVEFPGGILGLVLNLEEDNVGVAIMGEDTNIKEGDIVKRTGRIAQVPVGEAVLGRVVDTTGAPIDGKGPINASETRRIEVVAPGVIARKSVHEPCYTGLKAVDAMTPVGRGQRELIIGDRQIGKTAVAIDAILAQKDTDVYCIYVACGQKKSSVAQVAAILEKHGAMEYTTIVAACASDPASLQYLAPYAGCSMGEYFRDNGKHALIIYDDLSKQAAAYRQVSLLLRRPPGREAYPGDIFYNHSRLLERAAKLNDELGAGSLTALPIIETQAGDVSAFIPTNVISITDGQIYLEPNLFFAGIRPAINVGLSVSRVGGAAQVKAMKQVAGTLRLDMAQFRELEAFAAFGSDLDAATQRQLTRGARLVEILKQPQYKPLSMEKQVTILFAGTNGHLDELPLDAIAAYEAGLYTFIETKYPQVFADLKEKQAFTDEIKQTLTKALGEYGQEFKDTIK.

Residue 169-176 (GDRQIGKT) participates in ATP binding.

The protein belongs to the ATPase alpha/beta chains family. As to quaternary structure, F-type ATPases have 2 components, CF(1) - the catalytic core - and CF(0) - the membrane proton channel. CF(1) has five subunits: alpha(3), beta(3), gamma(1), delta(1), epsilon(1). CF(0) has three main subunits: a(1), b(2) and c(9-12). The alpha and beta chains form an alternating ring which encloses part of the gamma chain. CF(1) is attached to CF(0) by a central stalk formed by the gamma and epsilon chains, while a peripheral stalk is formed by the delta and b chains.

It localises to the cell inner membrane. The enzyme catalyses ATP + H2O + 4 H(+)(in) = ADP + phosphate + 5 H(+)(out). In terms of biological role, produces ATP from ADP in the presence of a proton gradient across the membrane. The alpha chain is a regulatory subunit. The chain is ATP synthase subunit alpha from Desulfosudis oleivorans (strain DSM 6200 / JCM 39069 / Hxd3) (Desulfococcus oleovorans).